Reading from the N-terminus, the 93-residue chain is UPF0147 protein PF0239 (93 aa).

It belongs to the UPF0147 family.

In Pyrococcus furiosus (strain ATCC 43587 / DSM 3638 / JCM 8422 / Vc1), this protein is UPF0147 protein PF0239.